Here is a 162-residue protein sequence, read N- to C-terminus: Cytochrome c-type biogenesis protein CcmE (162 aa).

Topologically, residues 1-13 (MSFWPQSRKARRR) are cytoplasmic. The helical; Signal-anchor for type II membrane protein transmembrane segment at 14–34 (LTILLAIAPVLALAVGLALYG) threads the bilayer. At 35–162 (LRDSISLFYT…DAPAYGSQKP (128 aa)) the chain is on the periplasmic side. Positions 128 and 132 each coordinate heme. Over residues 140-151 (ALKEQGEWRGEG) the composition is skewed to basic and acidic residues. The segment at 140-162 (ALKEQGEWRGEGADAPAYGSQKP) is disordered.

The protein belongs to the CcmE/CycJ family.

The protein localises to the cell inner membrane. Heme chaperone required for the biogenesis of c-type cytochromes. Transiently binds heme delivered by CcmC and transfers the heme to apo-cytochromes in a process facilitated by CcmF and CcmH. This is Cytochrome c-type biogenesis protein CcmE from Caulobacter vibrioides (strain ATCC 19089 / CIP 103742 / CB 15) (Caulobacter crescentus).